We begin with the raw amino-acid sequence, 121 residues long: Ribonuclease P protein component (121 aa).

It belongs to the RnpA family. In terms of assembly, consists of a catalytic RNA component (M1 or rnpB) and a protein subunit.

It carries out the reaction Endonucleolytic cleavage of RNA, removing 5'-extranucleotides from tRNA precursor.. Functionally, RNaseP catalyzes the removal of the 5'-leader sequence from pre-tRNA to produce the mature 5'-terminus. It can also cleave other RNA substrates such as 4.5S RNA. The protein component plays an auxiliary but essential role in vivo by binding to the 5'-leader sequence and broadening the substrate specificity of the ribozyme. This Geobacillus kaustophilus (strain HTA426) protein is Ribonuclease P protein component.